Here is a 472-residue protein sequence, read N- to C-terminus: Homeobox protein PKNOX2 (472 aa).

The disordered stretch occupies residues 1 to 62 (MMQHASPAPA…STPVPSAPID (62 aa)). A compositionally biased stretch (polar residues) spans 26 to 38 (DSPQMTATTQPPS). Low complexity predominate over residues 46 to 56 (SAPSAAASTPV). An MEIS N-terminal domain is found at 96–179 (GSECITSASF…MHSDNLLRND (84 aa)). Residues 291-350 (KRGVLPKHATNIMRSWLFQHLMHPYPTEDEKRQIAAQTNLTLLQVNNWFVNARRRILQPM) constitute a DNA-binding region (homeobox). 3 disordered regions span residues 351–371 (LDAS…QHRP), 386–405 (QQQG…LDNL), and 423–472 (AAHD…DSLV). Residues 361-371 (KAKKIKSQHRP) show a composition bias toward basic residues. Positions 396–405 (PDGSINLDNL) are enriched in polar residues. The span at 429–454 (LDGTEEEDEDEMEEEEEEELEEEVDE) shows a compositional bias: acidic residues.

This sequence belongs to the TALE/MEIS homeobox family.

Its subcellular location is the nucleus. This chain is Homeobox protein PKNOX2 (PKNOX2), found in Pongo abelii (Sumatran orangutan).